The primary structure comprises 91 residues: MDPLGFFRNRPSYVVVFGIILLIVACICAYIELSKSGKPADSALRSISIISFILAILLLLGIILFSGYNRYCTGNVVDESRYATSPGTEIQ.

The Intravirion portion of the chain corresponds to 1–12 (MDPLGFFRNRPS). The chain crosses the membrane as a helical span at residues 13-33 (YVVVFGIILLIVACICAYIEL). At 34–46 (SKSGKPADSALRS) the chain is on the virion surface side. Residues 47–67 (ISIISFILAILLLLGIILFSG) form a helical membrane-spanning segment. Over 68–91 (YNRYCTGNVVDESRYATSPGTEIQ) the chain is Intravirion.

Belongs to the chordopoxvirinae A14 family. Homodimer; disulfide-linked. Interacts with A17. Post-translationally, phosphorylated by viral F10 kinase, phosphorylation state is regulated by H1 phosphatase.

The protein localises to the virion membrane. In terms of biological role, envelope protein which is a major component of the mature virion (MV) membrane. Essential for membrane biogenesis. Is required, together with A17, to form bona fide crescents, which can progress to form the immature virion (IV) membrane. A14 and A17 form a lattice that is stabilized by disulfide bonds and serves as an anchor within the viral membrane to which several other proteins important in virion structure and morphogenesis attach. The protein is Virion membrane protein A14 homolog of Fowlpox virus (strain NVSL) (FPV).